A 266-amino-acid polypeptide reads, in one-letter code: Tryptophan synthase alpha chain (266 aa).

Active-site proton acceptor residues include glutamate 49 and aspartate 60.

The protein belongs to the TrpA family. As to quaternary structure, tetramer of two alpha and two beta chains.

It carries out the reaction (1S,2R)-1-C-(indol-3-yl)glycerol 3-phosphate + L-serine = D-glyceraldehyde 3-phosphate + L-tryptophan + H2O. It functions in the pathway amino-acid biosynthesis; L-tryptophan biosynthesis; L-tryptophan from chorismate: step 5/5. Functionally, the alpha subunit is responsible for the aldol cleavage of indoleglycerol phosphate to indole and glyceraldehyde 3-phosphate. In Thioalkalivibrio sulfidiphilus (strain HL-EbGR7), this protein is Tryptophan synthase alpha chain.